Reading from the N-terminus, the 830-residue chain is Post-transcriptional regulator MKT1 (830 aa).

A Glycyl lysine isopeptide (Lys-Gly) (interchain with G-Cter in ubiquitin) cross-link involves residue Lys4. Positions 130–380 (RSRGWTQWNN…SPATTVTKNA (251 aa)) are interaction with PBP1. The segment at 347–400 (DSEKNNKDGKKSNLSSPSSASSSASPATTVTKNASEKLTYEKSSTKEVRKPRDI) is disordered. Ser358, Ser362, and Ser371 each carry phosphoserine. Low complexity predominate over residues 361–373 (SSPSSASSSASPA). Positions 380–400 (ASEKLTYEKSSTKEVRKPRDI) are enriched in basic and acidic residues.

The protein belongs to the XPG/RAD2 endonuclease family. In terms of assembly, interacts (via C-terminus) with PBP1 (via C-terminus).

It is found in the cytoplasm. The protein resides in the cytosol. Involved in 3'-UTR mediated RNA regulation. Binds to RNA-binding and RNA regulatory proteins. Complexes with PAB1-binding protein to promote mRNA interactions with poly(A)-binding protein. Promotes mating-type switching in mother cells by positively regulating HO expression. The protein is Post-transcriptional regulator MKT1 (MKT1) of Saccharomyces cerevisiae (strain ATCC 204508 / S288c) (Baker's yeast).